The primary structure comprises 340 residues: MTVQMEYEKDVKVAALDGKKIAVIGYGSQGHAHAQNLRDSGRDVIIGVRPGKSFDKAKEDGFDTYTVAEATKLADVIMILAPDEIQQELYEAEIAPNLEAGNAVGFAHGFNIHFEFIKVPADVDVFMCAPKGPGHLVRRTYEEGFGVPALYAVYQDATGNAKNIAMDWCKGVGAARVGLLETTYKEETEEDLFGEQAVLCGGLTALIEAGFEVLTEAGYAPELAYFEVLHEMKLIVDLIYEGGFKKMRQSISNTAEYGDYVSGPRVITEQVKENMKAVLADIQNGKFANDFVNDYKAGRPKLTAYREQAANLEIEKVGAELRKAMPFVGKNDDDAFKIYN.

In terms of domain architecture, KARI N-terminal Rossmann spans 3 to 182; that stretch reads VQMEYEKDVK…GAARVGLLET (180 aa). Residues 26 to 29, arginine 49, serine 53, and 83 to 86 each bind NADP(+); these read YGSQ and DEIQ. Residue histidine 108 is part of the active site. An NADP(+)-binding site is contributed by glycine 134. The KARI C-terminal knotted domain maps to 183-328; it reads TYKEETEEDL…AELRKAMPFV (146 aa). Residues aspartate 191, glutamate 195, glutamate 227, and glutamate 231 each coordinate Mg(2+). Serine 252 serves as a coordination point for substrate.

Belongs to the ketol-acid reductoisomerase family. Mg(2+) serves as cofactor.

It catalyses the reaction (2R)-2,3-dihydroxy-3-methylbutanoate + NADP(+) = (2S)-2-acetolactate + NADPH + H(+). It carries out the reaction (2R,3R)-2,3-dihydroxy-3-methylpentanoate + NADP(+) = (S)-2-ethyl-2-hydroxy-3-oxobutanoate + NADPH + H(+). The protein operates within amino-acid biosynthesis; L-isoleucine biosynthesis; L-isoleucine from 2-oxobutanoate: step 2/4. It participates in amino-acid biosynthesis; L-valine biosynthesis; L-valine from pyruvate: step 2/4. Functionally, involved in the biosynthesis of branched-chain amino acids (BCAA). Catalyzes an alkyl-migration followed by a ketol-acid reduction of (S)-2-acetolactate (S2AL) to yield (R)-2,3-dihydroxy-isovalerate. In the isomerase reaction, S2AL is rearranged via a Mg-dependent methyl migration to produce 3-hydroxy-3-methyl-2-ketobutyrate (HMKB). In the reductase reaction, this 2-ketoacid undergoes a metal-dependent reduction by NADPH to yield (R)-2,3-dihydroxy-isovalerate. The sequence is that of Ketol-acid reductoisomerase (NADP(+)) from Streptococcus pneumoniae (strain JJA).